Consider the following 363-residue polypeptide: Cytochrome b (363 aa).

The next 4 membrane-spanning stretches (helical) occupy residues 24–44, 68–90, 105–125, and 171–191; these read VGFSLGFFIALQIICGVCLAW, FVIRSVHICFTSLLYLLLYIHIF, VWFIGFILFVFIIIIAFIGYV, and LHVLHVLLPFILLIILILHLF. The heme b site is built by His74 and His88. Heme b is bound by residues His175 and His189. An a ubiquinone-binding site is contributed by His194. Helical transmembrane passes span 219–239, 287–307, 321–341, and 342–362; these read FYLRDMFLAFSILLCMMYVIF, FLMVILLFSLFLFILNCILWF, LILFYSIWMSGFLALYVVLAY, and PIWMELQYWVLLLFLLIVCRL.

The protein belongs to the cytochrome b family. In terms of assembly, the main subunits of complex b-c1 are: cytochrome b, cytochrome c1 and the Rieske protein. Heme b serves as cofactor.

The protein resides in the mitochondrion inner membrane. Functionally, component of the ubiquinol-cytochrome c reductase complex (complex III or cytochrome b-c1 complex) that is part of the mitochondrial respiratory chain. The b-c1 complex mediates electron transfer from ubiquinol to cytochrome c. Contributes to the generation of a proton gradient across the mitochondrial membrane that is then used for ATP synthesis. This is Cytochrome b (MT-CYB) from Trypanosoma brucei brucei.